Reading from the N-terminus, the 246-residue chain is Ubiquitin-conjugating enzyme E2 6 (246 aa).

Topologically, residues 1–224 (MATKQAQKRL…LEKQHNDKPN (224 aa)) are cytoplasmic. The region spanning 5–154 (QAQKRLTKEY…FNSTRFKLVF (150 aa)) is the UBC core domain. Cys-87 acts as the Glycyl thioester intermediate in catalysis. The chain crosses the membrane as a helical span at residues 225 to 245 (GSSSMFYIGVALFLFLVGLFM).

Belongs to the ubiquitin-conjugating enzyme family.

The protein resides in the endoplasmic reticulum membrane. The enzyme catalyses S-ubiquitinyl-[E1 ubiquitin-activating enzyme]-L-cysteine + [E2 ubiquitin-conjugating enzyme]-L-cysteine = [E1 ubiquitin-activating enzyme]-L-cysteine + S-ubiquitinyl-[E2 ubiquitin-conjugating enzyme]-L-cysteine.. The protein operates within protein modification; protein ubiquitination. Its function is as follows. Catalyzes the covalent attachment of ubiquitin to other proteins. Functions in degradation of misfolded or regulated proteins localized in the endoplasmic reticulum (ER) lumen or membrane via the ubiquitin-proteasome system. Cognate E2 conjugating enzyme for the DOA10 ubiquitin ligase complex, which is part of the ERAD-C pathway responsible for the rapid degradation of membrane proteins with misfolded cytoplasmic domains. The protein is Ubiquitin-conjugating enzyme E2 6 (UBC6) of Candida glabrata (strain ATCC 2001 / BCRC 20586 / JCM 3761 / NBRC 0622 / NRRL Y-65 / CBS 138) (Yeast).